A 205-amino-acid polypeptide reads, in one-letter code: Holliday junction branch migration complex subunit RuvA (205 aa).

The interval 1 to 64 (MIGRIRGLLV…EDAQLLYGFI (64 aa)) is domain I. The segment at 65 to 143 (SKQERALFRL…SLMEASVGSE (79 aa)) is domain II. The segment at 144–156 (REFMLQSNYTAPV) is flexible linker. The interval 157 to 205 (VANTAEEDAIAALLSLGYKPAQASKAVSAVYVDGIDSESLIKSALKSML) is domain III.

The protein belongs to the RuvA family. Homotetramer. Forms an RuvA(8)-RuvB(12)-Holliday junction (HJ) complex. HJ DNA is sandwiched between 2 RuvA tetramers; dsDNA enters through RuvA and exits via RuvB. An RuvB hexamer assembles on each DNA strand where it exits the tetramer. Each RuvB hexamer is contacted by two RuvA subunits (via domain III) on 2 adjacent RuvB subunits; this complex drives branch migration. In the full resolvosome a probable DNA-RuvA(4)-RuvB(12)-RuvC(2) complex forms which resolves the HJ.

It localises to the cytoplasm. In terms of biological role, the RuvA-RuvB-RuvC complex processes Holliday junction (HJ) DNA during genetic recombination and DNA repair, while the RuvA-RuvB complex plays an important role in the rescue of blocked DNA replication forks via replication fork reversal (RFR). RuvA specifically binds to HJ cruciform DNA, conferring on it an open structure. The RuvB hexamer acts as an ATP-dependent pump, pulling dsDNA into and through the RuvAB complex. HJ branch migration allows RuvC to scan DNA until it finds its consensus sequence, where it cleaves and resolves the cruciform DNA. The protein is Holliday junction branch migration complex subunit RuvA of Shewanella piezotolerans (strain WP3 / JCM 13877).